The chain runs to 625 residues: RecQ-mediated genome instability protein 1 (625 aa).

Position 1 is an N-acetylmethionine (Met1). Ser225 is subject to Phosphoserine. Positions Leu257–Gln282 are disordered. Ser284 and Ser292 each carry phosphoserine. Residues Lys334, Lys387, and Lys426 each participate in a glycyl lysine isopeptide (Lys-Gly) (interchain with G-Cter in SUMO2) cross-link.

Belongs to the RMI1 family. As to quaternary structure, component of the RMI complex, containing at least TOP3A, RMI1 and RMI2. The RMI complex interacts with BLM. Directly interacts with RMI2 and TOP3A. May bind DHJ. Interacts (via N-terminal region) with BLM; the interaction is direct.

It localises to the nucleus. Essential component of the RMI complex, a complex that plays an important role in the processing of homologous recombination intermediates to limit DNA crossover formation in cells. Promotes TOP3A binding to double Holliday junctions (DHJ) and hence stimulates TOP3A-mediated dissolution. Required for BLM phosphorylation during mitosis. Within the BLM complex, required for BLM and TOP3A stability. In Homo sapiens (Human), this protein is RecQ-mediated genome instability protein 1 (RMI1).